Consider the following 848-residue polypeptide: Coiled-coil and C2 domain-containing protein 1B (848 aa).

The segment covering 1–10 has biased composition (basic residues); it reads MPGPRPRKGP. Disordered stretches follow at residues 1–21 and 53–75; these read MPGPRPRKGPKTSGQGAETAK and ALTGETASRSRKPAPKGQAPLPM. A coiled-coil region spans residues 165–193; it reads LQALLEERIRNYREAAASAKEAGEAAKAR. Disordered stretches follow at residues 217–276, 326–353, 433–460, and 476–523; these read EDEI…DPDP, VDLSGMPPAPADLKALPQASKASSATQG, DFAELPVPPGFPPIPGLEPRKGSEQDSV, and ALVD…SPSV. A compositionally biased stretch (pro residues) spans 438-448; the sequence is PVPPGFPPIPG. At Ser455 the chain carries Phosphoserine. Over residues 476 to 485 the composition is skewed to acidic residues; it reads ALVDDDEESD. 2 stretches are compositionally biased toward low complexity: residues 487 to 498 and 509 to 522; these read PAQAPLAKKPAQ and EPKASSSKESLSPS. Ser583 is modified (phosphoserine). At Thr586 the chain carries Phosphothreonine. Residues 600 to 626 are a coiled coil; that stretch reads LRLSQKAEEVYAQLQKMLQEQQAKCLL. Residues 666-805 enclose the C2 domain; that stretch reads DPPSHHFELK…EKECEIREIM (140 aa).

The protein belongs to the CC2D1 family. Interacts with CHMP4B.

The protein resides in the nucleus. In terms of biological role, transcription factor that binds specifically to the DRE (dual repressor element) and represses HTR1A gene transcription in neuronal cells. The polypeptide is Coiled-coil and C2 domain-containing protein 1B (Cc2d1b) (Mus musculus (Mouse)).